We begin with the raw amino-acid sequence, 286 residues long: NADP-dependent dehydrogenase clz5 (286 aa).

7 residues coordinate NADP(+): serine 49, leucine 51, aspartate 93, tyrosine 207, lysine 211, isoleucine 241, and glutamine 245. Catalysis depends on tyrosine 207, which acts as the Proton acceptor. The active-site Proton donor is the tyrosine 207. Catalysis depends on lysine 211, which acts as the Lowers pKa of active site Tyr.

The protein belongs to the short-chain dehydrogenases/reductases (SDR) family. As to quaternary structure, homodimer.

The protein localises to the cytoplasm. Its subcellular location is the cytosol. It participates in secondary metabolite biosynthesis. Functionally, NADP-dependent dehydrogenase; part of the gene cluster that mediates the biosynthesis of squalestatin S1 (SQS1, also known as zaragozic acid A), a heavily oxidized fungal polyketide that offers potent cholesterol lowering activity by targeting squalene synthase (SS). SQS1 is composed of a 2,8-dioxobicyclic[3.2.1]octane-3,4,5-tricarboxyclic acid core that is connected to two lipophilic polyketide arms. These initial steps feature the priming of an unusual benzoic acid starter unit onto the highly reducing polyketide synthase clz14, followed by oxaloacetate extension and product release to generate a tricarboxylic acid containing product. The phenylalanine ammonia lyase (PAL) clz10 and the acyl-CoA ligase clz12 are involved in transforming phenylalanine into benzoyl-CoA. The citrate synthase-like protein clz17 is involved in connecting the C-alpha-carbons of the hexaketide chain and oxaloacetate to afford the tricarboxylic acid unit. The potential hydrolytic enzymes, clz11 and clz13, are in close proximity to pks2 and may participate in product release. On the other side, the tetraketide arm is synthesized by a the squalestatin tetraketide synthase clz2 and enzymatically esterified to the core in the last biosynthetic step, by the acetyltransferase clz6. The biosynthesis of the tetraketide must involve 3 rounds of chain extension. After the first and second rounds methyl-transfer occurs, and in all rounds of extension the ketoreductase and dehydratase are active. The enoyl reductase and C-MeT of clz2 are not active in the final round of extension. The acetyltransferase clz6 appears to have a broad substrate selectivity for its acyl CoA substrate, allowing the in vitro synthesis of novel squalestatins. The biosynthesis of SQS1 requires several oxidative steps likely performed by oxidoreductases clz3, clz15 and clz16. Finally, in support of the identification of the cluster as being responsible for SQS1 production, the cluster contains a gene encoding a putative squalene synthase (SS) clz20, suggesting a likely mechanism for self-resistance. The polypeptide is NADP-dependent dehydrogenase clz5 (Cochliobolus lunatus (Filamentous fungus)).